Consider the following 352-residue polypeptide: Alanine racemase (352 aa).

Catalysis depends on lysine 33, which acts as the Proton acceptor; specific for D-alanine. Lysine 33 is subject to N6-(pyridoxal phosphate)lysine. Arginine 129 contributes to the substrate binding site. Tyrosine 250 functions as the Proton acceptor; specific for L-alanine in the catalytic mechanism. Methionine 298 is a substrate binding site.

Belongs to the alanine racemase family. It depends on pyridoxal 5'-phosphate as a cofactor.

The catalysed reaction is L-alanine = D-alanine. It participates in amino-acid biosynthesis; D-alanine biosynthesis; D-alanine from L-alanine: step 1/1. Functionally, catalyzes the interconversion of L-alanine and D-alanine. May also act on other amino acids. This Neisseria gonorrhoeae (strain ATCC 700825 / FA 1090) protein is Alanine racemase (alr).